Reading from the N-terminus, the 221-residue chain is Phosphatidylserine decarboxylase proenzyme (221 aa).

The active-site Schiff-base intermediate with substrate; via pyruvic acid is serine 189. Serine 189 is modified (pyruvic acid (Ser); by autocatalysis).

Belongs to the phosphatidylserine decarboxylase family. PSD-A subfamily. In terms of assembly, heterodimer of a large membrane-associated beta subunit and a small pyruvoyl-containing alpha subunit. Requires pyruvate as cofactor. Is synthesized initially as an inactive proenzyme. Formation of the active enzyme involves a self-maturation process in which the active site pyruvoyl group is generated from an internal serine residue via an autocatalytic post-translational modification. Two non-identical subunits are generated from the proenzyme in this reaction, and the pyruvate is formed at the N-terminus of the alpha chain, which is derived from the carboxyl end of the proenzyme. The post-translation cleavage follows an unusual pathway, termed non-hydrolytic serinolysis, in which the side chain hydroxyl group of the serine supplies its oxygen atom to form the C-terminus of the beta chain, while the remainder of the serine residue undergoes an oxidative deamination to produce ammonia and the pyruvoyl prosthetic group on the alpha chain.

The protein localises to the cell membrane. The catalysed reaction is a 1,2-diacyl-sn-glycero-3-phospho-L-serine + H(+) = a 1,2-diacyl-sn-glycero-3-phosphoethanolamine + CO2. It functions in the pathway phospholipid metabolism; phosphatidylethanolamine biosynthesis; phosphatidylethanolamine from CDP-diacylglycerol: step 2/2. Catalyzes the formation of phosphatidylethanolamine (PtdEtn) from phosphatidylserine (PtdSer). In Porphyromonas gingivalis (strain ATCC 33277 / DSM 20709 / CIP 103683 / JCM 12257 / NCTC 11834 / 2561), this protein is Phosphatidylserine decarboxylase proenzyme.